Reading from the N-terminus, the 89-residue chain is Small ribosomal subunit protein bS20 (89 aa).

Belongs to the bacterial ribosomal protein bS20 family.

Binds directly to 16S ribosomal RNA. The sequence is that of Small ribosomal subunit protein bS20 from Stenotrophomonas maltophilia (strain K279a).